The following is a 390-amino-acid chain: Probable tRNA pseudouridine synthase D 2 (390 aa).

The active-site Nucleophile is Asp93. Positions 166 to 353 (YVLNYYGIQR…YGTRRKMVTP (188 aa)) constitute a TRUD domain.

This sequence belongs to the pseudouridine synthase TruD family.

It catalyses the reaction uridine(13) in tRNA = pseudouridine(13) in tRNA. Could be responsible for synthesis of pseudouridine from uracil-13 in transfer RNAs. The protein is Probable tRNA pseudouridine synthase D 2 of Methanococcus maripaludis (strain DSM 14266 / JCM 13030 / NBRC 101832 / S2 / LL).